We begin with the raw amino-acid sequence, 404 residues long: S-adenosylmethionine synthase (404 aa).

139–144 contacts ATP; that stretch reads GKGSTD.

This sequence belongs to the AdoMet synthase 2 family. The cofactor is Mg(2+).

The catalysed reaction is L-methionine + ATP + H2O = S-adenosyl-L-methionine + phosphate + diphosphate. The protein operates within amino-acid biosynthesis; S-adenosyl-L-methionine biosynthesis; S-adenosyl-L-methionine from L-methionine: step 1/1. Functionally, catalyzes the formation of S-adenosylmethionine from methionine and ATP. The chain is S-adenosylmethionine synthase from Saccharolobus islandicus (strain L.S.2.15 / Lassen #1) (Sulfolobus islandicus).